We begin with the raw amino-acid sequence, 115 residues long: WLMIVEQKCRVIVMLAKCFEAGKKKCQKYWSDSKETKKFGRVKVFNAEEVKYCGFLRRKFLIESVDEGITMKVFQYQYINWPDHCVPNTTSNLVRMHKYVIQCFEETGSDAPMVV.

Positions 1–115 constitute a Tyrosine-protein phosphatase domain; sequence WLMIVEQKCR…ETGSDAPMVV (115 aa). Asp-83 contributes to the substrate binding site.

This sequence belongs to the protein-tyrosine phosphatase family.

It carries out the reaction O-phospho-L-tyrosyl-[protein] + H2O = L-tyrosyl-[protein] + phosphate. This Styela plicata (Wrinkled sea squirt) protein is Tyrosine-protein phosphatase 19 (STY-19).